The sequence spans 141 residues: Large ribosomal subunit protein uL11 (141 aa).

Belongs to the universal ribosomal protein uL11 family. Part of the ribosomal stalk of the 50S ribosomal subunit. Interacts with L10 and the large rRNA to form the base of the stalk. L10 forms an elongated spine to which L12 dimers bind in a sequential fashion forming a multimeric L10(L12)X complex. In terms of processing, one or more lysine residues are methylated.

In terms of biological role, forms part of the ribosomal stalk which helps the ribosome interact with GTP-bound translation factors. This is Large ribosomal subunit protein uL11 from Synechococcus sp. (strain CC9605).